A 187-amino-acid chain; its full sequence is Elongation factor P (187 aa).

It belongs to the elongation factor P family.

It is found in the cytoplasm. Its pathway is protein biosynthesis; polypeptide chain elongation. In terms of biological role, involved in peptide bond synthesis. Stimulates efficient translation and peptide-bond synthesis on native or reconstituted 70S ribosomes in vitro. Probably functions indirectly by altering the affinity of the ribosome for aminoacyl-tRNA, thus increasing their reactivity as acceptors for peptidyl transferase. This is Elongation factor P from Mycobacteroides abscessus (strain ATCC 19977 / DSM 44196 / CCUG 20993 / CIP 104536 / JCM 13569 / NCTC 13031 / TMC 1543 / L948) (Mycobacterium abscessus).